The chain runs to 145 residues: Large ribosomal subunit protein uL16 (145 aa).

The protein belongs to the universal ribosomal protein uL16 family. As to quaternary structure, part of the 50S ribosomal subunit.

Binds 23S rRNA and is also seen to make contacts with the A and possibly P site tRNAs. In Herpetosiphon aurantiacus (strain ATCC 23779 / DSM 785 / 114-95), this protein is Large ribosomal subunit protein uL16.